Consider the following 537-residue polypeptide: CTP synthase (537 aa).

Residues 1–269 (MNQTKYIFVT…DKVALKKLDL (269 aa)) are amidoligase domain. Serine 15 is a CTP binding site. Residue serine 15 participates in UTP binding. 16–21 (SLGKGI) provides a ligand contact to ATP. L-glutamine is bound at residue tyrosine 56. Aspartate 73 lines the ATP pocket. Aspartate 73 and glutamate 143 together coordinate Mg(2+). CTP contacts are provided by residues 150–152 (DIE), 190–195 (KTKPTQ), and lysine 226. Residues 190–195 (KTKPTQ) and lysine 226 contribute to the UTP site. In terms of domain architecture, Glutamine amidotransferase type-1 spans 295–537 (SIGLVGKYVE…IAAAVKHKNK (243 aa)). Glycine 357 provides a ligand contact to L-glutamine. The active-site Nucleophile; for glutamine hydrolysis is cysteine 384. Residues 385-388 (LGMQ), glutamate 408, and arginine 465 each bind L-glutamine. Residues histidine 510 and glutamate 512 contribute to the active site.

The protein belongs to the CTP synthase family. As to quaternary structure, homotetramer.

It catalyses the reaction UTP + L-glutamine + ATP + H2O = CTP + L-glutamate + ADP + phosphate + 2 H(+). It carries out the reaction L-glutamine + H2O = L-glutamate + NH4(+). The catalysed reaction is UTP + NH4(+) + ATP = CTP + ADP + phosphate + 2 H(+). The protein operates within pyrimidine metabolism; CTP biosynthesis via de novo pathway; CTP from UDP: step 2/2. With respect to regulation, allosterically activated by GTP, when glutamine is the substrate; GTP has no effect on the reaction when ammonia is the substrate. The allosteric effector GTP functions by stabilizing the protein conformation that binds the tetrahedral intermediate(s) formed during glutamine hydrolysis. Inhibited by the product CTP, via allosteric rather than competitive inhibition. Functionally, catalyzes the ATP-dependent amination of UTP to CTP with either L-glutamine or ammonia as the source of nitrogen. Regulates intracellular CTP levels through interactions with the four ribonucleotide triphosphates. In Flavobacterium psychrophilum (strain ATCC 49511 / DSM 21280 / CIP 103535 / JIP02/86), this protein is CTP synthase.